The following is a 304-amino-acid chain: Polyisoprenyl-teichoic acid--peptidoglycan teichoic acid transferase TagU (304 aa).

At 1 to 4 the chain is on the cytoplasmic side; that stretch reads MKKK. The helical; Signal-anchor for type II membrane protein transmembrane segment at 5–25 threads the bilayer; the sequence is ILFWILGIIGIMIIGGGVYAY. Residues 26–304 lie on the Extracellular side of the membrane; the sequence is NVYSSVSKTL…KLRAHLELTK (279 aa).

It belongs to the LytR/CpsA/Psr (LCP) family.

It localises to the cell membrane. The protein operates within cell wall biogenesis. Functionally, may catalyze the final step in cell wall teichoic acid biosynthesis, the transfer of the anionic cell wall polymers (APs) from their lipid-linked precursor to the cell wall peptidoglycan (PG). The polypeptide is Polyisoprenyl-teichoic acid--peptidoglycan teichoic acid transferase TagU (Bacillus mycoides (strain KBAB4) (Bacillus weihenstephanensis)).